The sequence spans 270 residues: tRNA 2-(methylsulfanyl)-N(6)-isopentenyladenosine(37) hydroxylase (270 aa).

Residues Glu-59, Glu-137, His-140, Glu-190, Glu-219, and His-222 each contribute to the Fe cation site.

Belongs to the MiaE family. In terms of assembly, monomer. Requires Fe cation as cofactor.

The catalysed reaction is 2-methylsulfanyl-N(6)-dimethylallyladenosine(37) in tRNA + AH2 + O2 = N(6)-[(2E)-4-hydroxy-3-methylbut-2-en-1-yl]-2-(methylsulfanyl)adenosine(37) in tRNA + A + H2O. It participates in tRNA modification; 2-methylthio-N-6-(cis-hydroxy)isopentenyl adenosine-tRNA biosynthesis. Its function is as follows. Involved in specific tRNA modification. Catalyzes the oxygen-dependent hydroxylation of 2-methylthio-N-6-isopentenyl adenosine (ms2i6A) to produce 2-methylthio-N-6-(cis-hydroxy)isopentenyl adenosine (ms2io6A) at position 37 in tRNAs. Can also use N6-(dimethylallyl)adenosine (i6A) as substrate, with lower efficiency. The presence of the hydroxyl group on the tRNA may regulate the ability of S.typhimurium to grow on the citric acid cycle (CAC) intermediates succinate, fumarate and malate. In Salmonella typhimurium (strain LT2 / SGSC1412 / ATCC 700720), this protein is tRNA 2-(methylsulfanyl)-N(6)-isopentenyladenosine(37) hydroxylase.